The chain runs to 89 residues: Small ribosomal subunit protein uS15 (89 aa).

Belongs to the universal ribosomal protein uS15 family. Part of the 30S ribosomal subunit. Forms a bridge to the 50S subunit in the 70S ribosome, contacting the 23S rRNA.

In terms of biological role, one of the primary rRNA binding proteins, it binds directly to 16S rRNA where it helps nucleate assembly of the platform of the 30S subunit by binding and bridging several RNA helices of the 16S rRNA. Its function is as follows. Forms an intersubunit bridge (bridge B4) with the 23S rRNA of the 50S subunit in the ribosome. This chain is Small ribosomal subunit protein uS15, found in Dictyoglomus turgidum (strain DSM 6724 / Z-1310).